The following is a 164-amino-acid chain: MTDTQVTWLTQEAFDRLKAELDQLIANRPVIAAEINDRREEGDLRENGGYHAAREEQGQQEARIRQLQELLNNAKVGEAPKQSGVALPGSVVKVYYDDDENDTETFLIATRQEGISDGKLEVYSPNSPLGGALLDAKVGESRTYTVPSGNVVKVTLVSAEPYQG.

Residues 50–76 (YHAAREEQGQQEARIRQLQELLNNAKV) adopt a coiled-coil conformation.

It belongs to the GreA/GreB family.

Functionally, necessary for efficient RNA polymerase transcription elongation past template-encoded arresting sites. The arresting sites in DNA have the property of trapping a certain fraction of elongating RNA polymerases that pass through, resulting in locked ternary complexes. Cleavage of the nascent transcript by cleavage factors such as GreA or GreB allows the resumption of elongation from the new 3'terminus. GreA releases sequences of 2 to 3 nucleotides. In Mycolicibacterium smegmatis (strain ATCC 700084 / mc(2)155) (Mycobacterium smegmatis), this protein is Transcription elongation factor GreA.